Consider the following 445-residue polypeptide: Tubulin beta chain (445 aa).

GTP-binding residues include glutamine 11, glutamate 69, serine 138, glycine 142, threonine 143, glycine 144, asparagine 204, and asparagine 226. Residue glutamate 69 coordinates Mg(2+).

The protein belongs to the tubulin family. As to quaternary structure, dimer of alpha and beta chains. A typical microtubule is a hollow water-filled tube with an outer diameter of 25 nm and an inner diameter of 15 nM. Alpha-beta heterodimers associate head-to-tail to form protofilaments running lengthwise along the microtubule wall with the beta-tubulin subunit facing the microtubule plus end conferring a structural polarity. Microtubules usually have 13 protofilaments but different protofilament numbers can be found in some organisms and specialized cells. Mg(2+) is required as a cofactor.

The protein localises to the cytoplasm. It is found in the cytoskeleton. Functionally, tubulin is the major constituent of microtubules, a cylinder consisting of laterally associated linear protofilaments composed of alpha- and beta-tubulin heterodimers. Microtubules grow by the addition of GTP-tubulin dimers to the microtubule end, where a stabilizing cap forms. Below the cap, tubulin dimers are in GDP-bound state, owing to GTPase activity of alpha-tubulin. The protein is Tubulin beta chain of Leishmania mexicana.